A 268-amino-acid chain; its full sequence is 3-methyl-2-oxobutanoate hydroxymethyltransferase (268 aa).

Mg(2+) is bound by residues aspartate 44 and aspartate 83. Residues 44-45, aspartate 83, and lysine 113 each bind 3-methyl-2-oxobutanoate; that span reads DS. Glutamate 115 is a Mg(2+) binding site. Glutamate 182 (proton acceptor) is an active-site residue.

The protein belongs to the PanB family. Homodecamer; pentamer of dimers. It depends on Mg(2+) as a cofactor.

Its subcellular location is the cytoplasm. The catalysed reaction is 3-methyl-2-oxobutanoate + (6R)-5,10-methylene-5,6,7,8-tetrahydrofolate + H2O = 2-dehydropantoate + (6S)-5,6,7,8-tetrahydrofolate. Its pathway is cofactor biosynthesis; (R)-pantothenate biosynthesis; (R)-pantoate from 3-methyl-2-oxobutanoate: step 1/2. In terms of biological role, catalyzes the reversible reaction in which hydroxymethyl group from 5,10-methylenetetrahydrofolate is transferred onto alpha-ketoisovalerate to form ketopantoate. The sequence is that of 3-methyl-2-oxobutanoate hydroxymethyltransferase from Synechococcus elongatus (strain ATCC 33912 / PCC 7942 / FACHB-805) (Anacystis nidulans R2).